Here is a 394-residue protein sequence, read N- to C-terminus: Alanine--glyoxylate aminotransferase (394 aa).

Residues 76 to 78 (AGH), S153, and Q204 each bind pyridoxal 5'-phosphate. Residue S153 coordinates substrate. K205 bears the N6-(pyridoxal phosphate)lysine mark. Pyridoxal 5'-phosphate contacts are provided by Y256 and T259. Residue R356 participates in substrate binding.

The protein belongs to the class-V pyridoxal-phosphate-dependent aminotransferase family. In terms of assembly, homodimer. Pyridoxal 5'-phosphate serves as cofactor.

It localises to the peroxisome. The catalysed reaction is glyoxylate + L-alanine = glycine + pyruvate. It carries out the reaction (2S)-2-aminobutanoate + glyoxylate = 2-oxobutanoate + glycine. The enzyme catalyses glyoxylate + L-phenylalanine = 3-phenylpyruvate + glycine. It catalyses the reaction glyoxylate + L-serine = 3-hydroxypyruvate + glycine. The catalysed reaction is 2-oxobutanoate + L-alanine = (2S)-2-aminobutanoate + pyruvate. It carries out the reaction L-phenylalanine + pyruvate = 3-phenylpyruvate + L-alanine. The enzyme catalyses L-serine + pyruvate = 3-hydroxypyruvate + L-alanine. Its function is as follows. Catalyzes the pyridoxal 5'-phosphate-dependent transamination of alanine with glyoxylate as an amino group acceptor. Can also catalyze, although with much less efficiency, the transamination of amino-butyrate, phenylalanine and serine with glyoxylate or pyruvate as an amino group acceptor. Does not catalyze the transamination of both 3-hydroxykynurenine and L-kynurenine. May play a role in the detoxification of glyoxylate, a toxic plant metabolite from the fly diet. This is Alanine--glyoxylate aminotransferase from Drosophila melanogaster (Fruit fly).